The chain runs to 342 residues: Heat-inducible transcription repressor HrcA (342 aa).

It belongs to the HrcA family.

Functionally, negative regulator of class I heat shock genes (grpE-dnaK-dnaJ and groELS operons). Prevents heat-shock induction of these operons. The chain is Heat-inducible transcription repressor HrcA from Leptospira borgpetersenii serovar Hardjo-bovis (strain JB197).